The following is a 605-amino-acid chain: Pescadillo homolog (605 aa).

The 95-residue stretch at 346 to 440 folds into the BRCT domain; it reads PVATLFSEFV…ELVPANLYLP (95 aa). The interval 449 to 553 is disordered; the sequence is SPWGDSTGYD…RKATEEEEEK (105 aa). Acidic residues predominate over residues 461–508; the sequence is AENDEDVEGSDAEEIDESADEDAESEEVEEDDTAAVALNEDDEDDEDE. The segment covering 526–537 has biased composition (basic and acidic residues); the sequence is EAKDVIDSESSD. Residues 533-605 adopt a coiled-coil conformation; the sequence is SESSDKKKKK…KAKLAKLDKK (73 aa).

The protein belongs to the pescadillo family. As to quaternary structure, component of the NOP7 complex, composed of ERB1, NOP7 and YTM1. The complex is held together by ERB1, which interacts with NOP7 via its N-terminal domain and with YTM1 via a high-affinity interaction between the seven-bladed beta-propeller domains of the 2 proteins. The NOP7 complex associates with the 66S pre-ribosome.

Its subcellular location is the nucleus. The protein resides in the nucleolus. The protein localises to the nucleoplasm. Component of the NOP7 complex, which is required for maturation of the 25S and 5.8S ribosomal RNAs and formation of the 60S ribosome. This chain is Pescadillo homolog, found in Kluyveromyces lactis (strain ATCC 8585 / CBS 2359 / DSM 70799 / NBRC 1267 / NRRL Y-1140 / WM37) (Yeast).